The following is a 935-amino-acid chain: Myocardin (935 aa).

Positions 12–27 (IRRKFRSVLQLRLQQR) match the MEF2C-binding motif. 3 RPEL repeats span residues 18–43 (SVLQ…PPLK), 62–87 (DSLR…QAST), and 106–131 (DDLN…PMDS). The tract at residues 37–73 (GLIPPLKGPTEFHDPRKQLDSAKTEDSLRRKGRNRSD) is disordered. Over residues 46–73 (TEFHDPRKQLDSAKTEDSLRRKGRNRSD) the composition is skewed to basic and acidic residues. The tract at residues 153–201 (FEDDSSRDGLSPDQARSEDPQGSTGSTPDIKSTEAPLDTIQDLTPGSES) is HDAC5-binding. The disordered stretch occupies residues 155-283 (DDSSRDGLSP…SPPPMDSAYA (129 aa)). Polar residues-rich tracts occupy residues 172–182 (PQGSTGSTPDI) and 206–216 (AASQPGNQSDP). A compositionally biased stretch (basic residues) spans 244–261 (NRHKKPKDPKPKVKKLKY). Residues 287–322 (QQQQLFLQLQILSQQQQQQQQQQQQQQQQQQQQQRF) adopt a coiled-coil conformation. A disordered region spans residues 337-378 (EQMARNPNPSSTPLSNTPLSPVKNSISGQTGVSSLKPGPLPP). Over residues 342–357 (NPNPSSTPLSNTPLSP) the composition is skewed to low complexity. A compositionally biased stretch (polar residues) spans 358–369 (VKNSISGQTGVS). Positions 380 to 414 (LDDLKVSELRQQLRIRGLPVSGTKTALVDRLRPFQ) constitute an SAP domain. Phosphoserine; by GSK3-beta is present on residues Ser454, Ser458, Ser462, and Ser466. The disordered stretch occupies residues 498–518 (ESLLSSLNGGSGPSEPDGLDS). Positions 519 to 563 (EKDKMLVEKQKVINQLTWKLRQEQRQVEELRMQLQKQKSSCSDQK) form a coiled coil. The segment at 579–605 (SCPFAPQQASGKGQGHSSDSPPPACET) is disordered. Over residues 585 to 597 (QQASGKGQGHSSD) the composition is skewed to polar residues. Phosphoserine; by GSK3-beta occurs at positions 624, 628, 632, and 636. The disordered stretch occupies residues 654–731 (NNHYFLASSS…DAVKQQMTRS (78 aa)). The span at 660–691 (ASSSGAQRENHGVSSPSSSQGCAQMTGLQSSD) shows a compositional bias: polar residues. Over residues 695-709 (PTFSIPSPTFSKSSS) the composition is skewed to low complexity. The interval 714–935 (ITQPPSYEDA…SPMDLHLQQW (222 aa)) is required for interaction with and ubiquitination by STUB1. A phosphoserine; by MAPK1 and MAPK3 mark is found at Ser812, Ser859, and Ser866. Residue Thr893 is modified to Phosphothreonine; by MAPK1 and MAPK3.

As to quaternary structure, homodimer. Interacts with MLLT7/FOXO4. Interacts with SRF, its association does not depend on specific DNA sequences for ternary complex formation. Interacts (via C-terminal) with EP300 (via CREB-binding domain). Interacts with HDAC4 and HDAC5. Interacts with MEF2C. Interacts (via C-terminus) with STUB1/CHIP. Interacts with PURB. In terms of processing, ubiquitinated; by STUB1/CHIP at the C-terminus, leading to its degradation by the proteasome. Phosphorylation by GSK3B is required for STUB1/CHIP-mediated ubiquitination. Phosphorylation negatively regulates transcriptional activity. Phosphorylated; by GSK3B. In terms of tissue distribution, expressed in smooth muscle cell-containing tissues. Expressed in the heart. Expressed in the aorta and bladder. Weakly expression in the lung, testis and kidney. Weakly expressed in the stomach. Weakly expressed in the intestine and colon. Expressed in the heart. As to expression, predominantly expressed in cardiac muscle. In terms of tissue distribution, predominantly expressed in smooth muscle cell-rich tissues.

It localises to the nucleus speckle. Functionally, smooth muscle cells (SM) and cardiac muscle cells-specific transcriptional factor which uses the canonical single or multiple CArG boxes DNA sequence. Acts as a cofactor of serum response factor (SRF) with the potential to modulate SRF-target genes. Plays a crucial role in cardiogenesis, urinary bladder development, and differentiation of the smooth muscle cell lineage (myogenesis). Positively regulates the transcription of genes involved in vascular smooth muscle contraction. In terms of biological role, positively regulates the activation of smooth muscle cell gene promoter regions. Positively regulates the activation of smooth muscle cell gene promoter regions. Activation of the MYH6 promoter is enhanced in the presence of MEF2C. The chain is Myocardin (Myocd) from Mus musculus (Mouse).